The sequence spans 342 residues: Glycerol-1-phosphate dehydrogenase [NAD(P)+] (342 aa).

NAD(+) is bound by residues 84-88 (GRPLD) and 106-109 (TSAS). Position 111 (Asp-111) interacts with substrate. Ser-115 serves as a coordination point for NAD(+). Asp-160 contacts substrate. 2 residues coordinate Zn(2+): Asp-160 and His-241. His-245 provides a ligand contact to substrate. His-260 provides a ligand contact to Zn(2+).

This sequence belongs to the glycerol-1-phosphate dehydrogenase family. As to quaternary structure, homodimer. It depends on Zn(2+) as a cofactor.

It is found in the cytoplasm. The enzyme catalyses sn-glycerol 1-phosphate + NAD(+) = dihydroxyacetone phosphate + NADH + H(+). It catalyses the reaction sn-glycerol 1-phosphate + NADP(+) = dihydroxyacetone phosphate + NADPH + H(+). Its pathway is membrane lipid metabolism; glycerophospholipid metabolism. Its function is as follows. Catalyzes the NAD(P)H-dependent reduction of dihydroxyacetonephosphate (DHAP or glycerone phosphate) to glycerol 1-phosphate (G1P). The G1P thus generated is used as the glycerophosphate backbone of phospholipids in the cellular membranes of Archaea. The polypeptide is Glycerol-1-phosphate dehydrogenase [NAD(P)+] (Pyrobaculum neutrophilum (strain DSM 2338 / JCM 9278 / NBRC 100436 / V24Sta) (Thermoproteus neutrophilus)).